Reading from the N-terminus, the 426-residue chain is Histidinol dehydrogenase (426 aa).

Positions 123, 185, and 208 each coordinate NAD(+). Ser231, Gln253, and His256 together coordinate substrate. Gln253 and His256 together coordinate Zn(2+). Catalysis depends on proton acceptor residues Glu321 and His322. Positions 322, 355, 409, and 414 each coordinate substrate. Asp355 lines the Zn(2+) pocket. His414 is a binding site for Zn(2+).

This sequence belongs to the histidinol dehydrogenase family. The cofactor is Zn(2+).

It carries out the reaction L-histidinol + 2 NAD(+) + H2O = L-histidine + 2 NADH + 3 H(+). It participates in amino-acid biosynthesis; L-histidine biosynthesis; L-histidine from 5-phospho-alpha-D-ribose 1-diphosphate: step 9/9. Its function is as follows. Catalyzes the sequential NAD-dependent oxidations of L-histidinol to L-histidinaldehyde and then to L-histidine. The protein is Histidinol dehydrogenase of Bacillus licheniformis (strain ATCC 14580 / DSM 13 / JCM 2505 / CCUG 7422 / NBRC 12200 / NCIMB 9375 / NCTC 10341 / NRRL NRS-1264 / Gibson 46).